Consider the following 63-residue polypeptide: UPF0434 protein GDI0182/Gdia_2252 (63 aa).

It belongs to the UPF0434 family.

The protein is UPF0434 protein GDI0182/Gdia_2252 of Gluconacetobacter diazotrophicus (strain ATCC 49037 / DSM 5601 / CCUG 37298 / CIP 103539 / LMG 7603 / PAl5).